We begin with the raw amino-acid sequence, 132 residues long: MKGLGSTIVRSLPNGARLVCADNTGAKELEVIAVKNYSGTVRRLPSAGVGQIVFVSVKKGTPEMRKQVLPAIIIRQKKEYKRADGTRVKFEDNAAVIVTPEGTPKGSDIKGPVSKEAAERWPGVSRLAKIIH.

This sequence belongs to the universal ribosomal protein uL14 family. In terms of assembly, part of the 50S ribosomal subunit. Forms a cluster with proteins L3 and L24e, part of which may contact the 16S rRNA in 2 intersubunit bridges.

Functionally, binds to 23S rRNA. Forms part of two intersubunit bridges in the 70S ribosome. The polypeptide is Large ribosomal subunit protein uL14 (Methanococcus vannielii).